The following is a 246-amino-acid chain: Pyridoxine 5'-phosphate synthase (246 aa).

Residue Asn-6 coordinates 3-amino-2-oxopropyl phosphate. 8 to 9 lines the 1-deoxy-D-xylulose 5-phosphate pocket; it reads DH. Arg-17 is a binding site for 3-amino-2-oxopropyl phosphate. The active-site Proton acceptor is His-49. Residues Arg-51 and His-56 each contribute to the 1-deoxy-D-xylulose 5-phosphate site. Glu-76 functions as the Proton acceptor in the catalytic mechanism. Thr-106 serves as a coordination point for 1-deoxy-D-xylulose 5-phosphate. His-196 (proton donor) is an active-site residue. 3-amino-2-oxopropyl phosphate contacts are provided by residues Gly-197 and 219 to 220; that span reads GH.

This sequence belongs to the PNP synthase family. Homooctamer; tetramer of dimers.

The protein localises to the cytoplasm. The enzyme catalyses 3-amino-2-oxopropyl phosphate + 1-deoxy-D-xylulose 5-phosphate = pyridoxine 5'-phosphate + phosphate + 2 H2O + H(+). The protein operates within cofactor biosynthesis; pyridoxine 5'-phosphate biosynthesis; pyridoxine 5'-phosphate from D-erythrose 4-phosphate: step 5/5. Functionally, catalyzes the complicated ring closure reaction between the two acyclic compounds 1-deoxy-D-xylulose-5-phosphate (DXP) and 3-amino-2-oxopropyl phosphate (1-amino-acetone-3-phosphate or AAP) to form pyridoxine 5'-phosphate (PNP) and inorganic phosphate. In Akkermansia muciniphila (strain ATCC BAA-835 / DSM 22959 / JCM 33894 / BCRC 81048 / CCUG 64013 / CIP 107961 / Muc), this protein is Pyridoxine 5'-phosphate synthase.